The sequence spans 106 residues: Tubulin-specific chaperone A (106 aa).

S94 bears the Phosphoserine mark.

The protein belongs to the TBCA family.

Its subcellular location is the cytoplasm. It localises to the cytoskeleton. Tubulin-folding protein; involved in the early step of the tubulin folding pathway. The protein is Tubulin-specific chaperone A (RBL2) of Saccharomyces cerevisiae (strain ATCC 204508 / S288c) (Baker's yeast).